We begin with the raw amino-acid sequence, 278 residues long: Embryonic polyadenylate-binding protein 2 (278 aa).

2 disordered regions span residues 21–66 (VSSD…GDAG) and 101–128 (EGTP…LSPE). The span at 35–50 (ETKEILGPEGGEGKEE) shows a compositional bias: basic and acidic residues. Residues 51–63 (KEEEEDAEEDQDG) are compositionally biased toward acidic residues. Residues 147–224 (RSVYVGNVDY…RVIKVLPKRT (78 aa)) form the RRM domain. The disordered stretch occupies residues 227-278 (PGISSTDRGGLRGHPGSRGAPFPHSGLQGRPRLRPQGQNRARGKFSPWFSPY).

In terms of tissue distribution, expressed in various adult tissues.

It localises to the cytoplasm. Functionally, binds the poly(A) tail of mRNA. This Homo sapiens (Human) protein is Embryonic polyadenylate-binding protein 2 (PABPN1L).